The following is a 529-amino-acid chain: Biotin-dependent 3-methylcrotonyl-coenzyme A carboxylase beta1 subunit (529 aa).

Positions 16 to 272 (HRRLVAELNN…CEPAQWDVRR (257 aa)) constitute a CoA carboxyltransferase N-terminal domain. The CoA carboxyltransferase C-terminal domain maps to 275–521 (EPKYPQAELY…SLCAHAPLDQ (247 aa)).

The protein belongs to the AccD/PCCB family. The biotin-dependent acyl-CoA carboxylase complex is composed of AccA1, which contains the biotin carboxylase (BC) and biotin carboxyl carrier protein (BCCP) domains, and AccD1, which contains the carboxyl transferase (CT) domain. The AccA1/AccD1 complex forms a dodecamer.

The catalysed reaction is 3-methylbut-2-enoyl-CoA + N(6)-carboxybiotinyl-L-lysyl-[protein] = 3-methyl-(2E)-glutaconyl-CoA + N(6)-biotinyl-L-lysyl-[protein]. It participates in amino-acid degradation; L-leucine degradation. Its function is as follows. Component of a biotin-dependent acyl-CoA carboxylase complex. This subunit transfers the CO2 from carboxybiotin to the CoA ester substrate. When associated with the alpha1 subunit AccA1, is involved in branched amino-acid catabolism with methylcrotonyl coenzyme A as the substrate. Shows residual with propionyl-CoA and acetyl-CoA. This is Biotin-dependent 3-methylcrotonyl-coenzyme A carboxylase beta1 subunit from Mycobacterium tuberculosis (strain ATCC 25618 / H37Rv).